A 147-amino-acid polypeptide reads, in one-letter code: TRAP-T-associated universal stress protein TeaD (147 aa).

Residues 8–10 (PVD), valine 38, 117–122 (GAQGTN), and 131–133 (SVA) contribute to the ATP site.

Belongs to the universal stress protein A family. As to quaternary structure, homodimer or homotetramer; in equilibrium. The dimer/tetramer ratio is ATP-dependent. ATP stabilizes dimer-dimer complexes, with one ATP molecule bound to each monomer.

The protein localises to the cytoplasm. ATP-binding protein that negatively regulates activity of the tripartite ATP-independent periplasmic (TRAP) ectoine transport system TeaABC. May regulate uptake according to the ATP status of the cell. This Halomonas elongata (strain ATCC 33173 / DSM 2581 / NBRC 15536 / NCIMB 2198 / 1H9) protein is TRAP-T-associated universal stress protein TeaD (teaD).